The primary structure comprises 339 residues: Adenylosuccinate synthetase (339 aa).

GTP is bound by residues 12-18 and 42-44; these read GDEGKGS and GHS. Catalysis depends on D13, which acts as the Proton acceptor. 2 residues coordinate Mg(2+): D13 and G42. IMP is bound by residues 13–16, 40–43, T127, R141, Q179, T194, and R256; these read DEGK and NAGH. The active-site Proton donor is the H43. Position 252–258 (252–258) interacts with substrate; sequence TVTGRRR. Residues R258, 284–286, and 324–326 contribute to the GTP site; these read MLD and KTG.

This sequence belongs to the adenylosuccinate synthetase family. Homodimer. Mg(2+) serves as cofactor.

The protein localises to the cytoplasm. It carries out the reaction IMP + L-aspartate + GTP = N(6)-(1,2-dicarboxyethyl)-AMP + GDP + phosphate + 2 H(+). Its pathway is purine metabolism; AMP biosynthesis via de novo pathway; AMP from IMP: step 1/2. Plays an important role in the de novo pathway of purine nucleotide biosynthesis. Catalyzes the first committed step in the biosynthesis of AMP from IMP. In Thermococcus onnurineus (strain NA1), this protein is Adenylosuccinate synthetase.